The primary structure comprises 130 residues: Small ribosomal subunit protein uS9 (130 aa).

The protein belongs to the universal ribosomal protein uS9 family.

In Bacillus thuringiensis subsp. konkukian (strain 97-27), this protein is Small ribosomal subunit protein uS9.